Reading from the N-terminus, the 358-residue chain is MGSIEVAERTTVGLAAKDPSGILTPYTYTLRNTGPDDVYIKIHYCGVCHSDLHQIKNDLGMSNYPMVPGHEVVGEVLEVGSNVTRFKVGEIVGVGLLVGCCKSCRACDSEIEQYCNKKIWSYNDVYTDGKITQGGFAESTVVEQKFVVKIPEGLAPEQVAPLLCAGVTVYSPLSHFGLKTPGLRGGILGLGGVGHMGVKVAKAFGHHVTVISSSDKKKKEALEDLGADSYLVSSDTVGMQEAADSLDYIIDTVPVGHPLEPYLSLLKIDGKLILMGVINTPLQFVTPMVMLGRKSITGSFVGSVKETEEMLEFWKEKGLSSMIEIVTMDYINKAFERLEKNDVRYRFVVDVKGSKFED.

One can recognise an Enoyl reductase (ER) domain in the interval 21–349 (GILTPYTYTL…KNDVRYRFVV (329 aa)). Cys-48 lines the Zn(2+) pocket. Position 50 (Ser-50) interacts with NADP(+). His-70, Glu-71, Cys-101, Cys-104, Cys-107, Cys-115, and Cys-164 together coordinate Zn(2+). NADP(+) is bound by residues Thr-168, 189 to 194 (GLGGVG), 212 to 217 (SSSDKK), Thr-252, Gly-276, and 299 to 301 (SFV).

It belongs to the zinc-containing alcohol dehydrogenase family. As to quaternary structure, homodimer. The cofactor is Zn(2+).

It carries out the reaction (E)-cinnamyl alcohol + NADP(+) = (E)-cinnamaldehyde + NADPH + H(+). It catalyses the reaction (E)-coniferol + NADP(+) = (E)-coniferaldehyde + NADPH + H(+). The catalysed reaction is (E)-sinapyl alcohol + NADP(+) = (E)-sinapaldehyde + NADPH + H(+). The enzyme catalyses (E)-4-coumaroyl alcohol + NADP(+) = (E)-4-coumaraldehyde + NADPH + H(+). It participates in aromatic compound metabolism; phenylpropanoid biosynthesis. Its function is as follows. Involved in lignin biosynthesis. Catalyzes the final step specific for the production of lignin monomers. Catalyzes the NADPH-dependent reduction of coniferaldehyde, 5-hydroxyconiferaldehyde, sinapaldehyde, 4-coumaraldehyde and caffeyl aldehyde to their respective alcohols. Can use coumaraldehyde and, with a lower efficiency, coniferaldehyde and sinapaldehyde as substrates. In Medicago truncatula (Barrel medic), this protein is Cinnamyl alcohol dehydrogenase 1.